The following is a 618-amino-acid chain: UvrABC system protein C (618 aa).

A GIY-YIG domain is found at 13 to 92; it reads DKPGVYLMKN…IKKYRPKYNI (80 aa). The UVR domain maps to 204 to 239; the sequence is LDIVENFKLNMEKAAGNLEFEKAAMLRDKINIIEKI.

It belongs to the UvrC family. Interacts with UvrB in an incision complex.

The protein localises to the cytoplasm. Its function is as follows. The UvrABC repair system catalyzes the recognition and processing of DNA lesions. UvrC both incises the 5' and 3' sides of the lesion. The N-terminal half is responsible for the 3' incision and the C-terminal half is responsible for the 5' incision. This is UvrABC system protein C from Clostridium botulinum (strain 657 / Type Ba4).